We begin with the raw amino-acid sequence, 339 residues long: DNA-directed RNA polymerase subunit alpha (339 aa).

The alpha N-terminal domain (alpha-NTD) stretch occupies residues 1–235; sequence MVREEVAVST…DLFIPFLHGE (235 aa). The segment at 267-339 is alpha C-terminal domain (alpha-CTD); sequence KAIALECIFI…FTIDLPKNKF (73 aa).

The protein belongs to the RNA polymerase alpha chain family. As to quaternary structure, in plastids the minimal PEP RNA polymerase catalytic core is composed of four subunits: alpha, beta, beta', and beta''. When a (nuclear-encoded) sigma factor is associated with the core the holoenzyme is formed, which can initiate transcription.

The protein resides in the plastid. Its subcellular location is the chloroplast. It carries out the reaction RNA(n) + a ribonucleoside 5'-triphosphate = RNA(n+1) + diphosphate. Its function is as follows. DNA-dependent RNA polymerase catalyzes the transcription of DNA into RNA using the four ribonucleoside triphosphates as substrates. This chain is DNA-directed RNA polymerase subunit alpha, found in Drimys granadensis.